We begin with the raw amino-acid sequence, 568 residues long: Proline--tRNA ligase (568 aa).

Belongs to the class-II aminoacyl-tRNA synthetase family. ProS type 1 subfamily. Homodimer.

Its subcellular location is the cytoplasm. The catalysed reaction is tRNA(Pro) + L-proline + ATP = L-prolyl-tRNA(Pro) + AMP + diphosphate. Its function is as follows. Catalyzes the attachment of proline to tRNA(Pro) in a two-step reaction: proline is first activated by ATP to form Pro-AMP and then transferred to the acceptor end of tRNA(Pro). As ProRS can inadvertently accommodate and process non-cognate amino acids such as alanine and cysteine, to avoid such errors it has two additional distinct editing activities against alanine. One activity is designated as 'pretransfer' editing and involves the tRNA(Pro)-independent hydrolysis of activated Ala-AMP. The other activity is designated 'posttransfer' editing and involves deacylation of mischarged Ala-tRNA(Pro). The misacylated Cys-tRNA(Pro) is not edited by ProRS. This Listeria innocua serovar 6a (strain ATCC BAA-680 / CLIP 11262) protein is Proline--tRNA ligase.